The following is a 664-amino-acid chain: Lamin tail domain-containing protein 2 (664 aa).

The segment at Met1–Ala40 is disordered. Residues Gln118–Gln169 are a coiled coil. A compositionally biased stretch (polar residues) spans Ser245–Leu260. 2 disordered regions span residues Ser245 to Pro272 and Thr286 to His329. Over residues Thr286–Ser298 the composition is skewed to low complexity. A compositionally biased stretch (polar residues) spans Gly312–Gln325. The 120-residue stretch at Pro362–Pro481 folds into the LTD domain. The disordered stretch occupies residues Ser504–Thr563. The segment covering Arg533 to Ser547 has biased composition (basic residues).

The polypeptide is Lamin tail domain-containing protein 2 (Lmntd2) (Mus musculus (Mouse)).